The following is a 2067-amino-acid chain: Non-reducing polyketide synthase PKS12 (2067 aa).

Positions 4 to 241 are N-terminal acylcarrier protein transacylase (SAT) domain; sequence FVFGDQSTRF…LPVPIYAPYH (238 aa). The segment at 350 to 373 is disordered; it reads NSMGPKASTSHSSAETQTESSSKN. Residues 356-373 show a composition bias toward polar residues; that stretch reads ASTSHSSAETQTESSSKN. One can recognise a Ketosynthase family 3 (KS3) domain in the interval 373-808; that stretch reads NSKIAIVAMS…GGNSAVLLQD (436 aa). Active-site for beta-ketoacyl synthase activity residues include Cys-545, His-680, and His-725. Positions 912 to 1199 are malonyl-CoA:ACP transacylase (MAT) domain; the sequence is FVFSGQGAQY…VVCSTFLKSS (288 aa). Catalysis depends on Ser-1001, which acts as the For acyl/malonyl transferase activity. The tract at residues 1297 to 1433 is N-terminal hotdog fold; sequence QKILQETSLD…CELRLEHPSQ (137 aa). One can recognise a PKS/mFAS DH domain in the interval 1297-1606; it reads QKILQETSLD…FQGLPRRVLN (310 aa). His-1329 acts as the Proton acceptor; for dehydratase activity in catalysis. Residues 1329–1604 form a product template (PT) domain region; the sequence is HRVNGVKVCT…ITFQGLPRRV (276 aa). Residues 1460 to 1606 form a C-terminal hotdog fold region; sequence LDSMLATGMV…FQGLPRRVLN (147 aa). Catalysis depends on Asp-1519, which acts as the Proton donor; for dehydratase activity. The interval 1619-1648 is disordered; the sequence is APMGRRDVPPSRMDVPPVRSGEGPPTSAPT. One can recognise a Carrier domain in the interval 1660–1738; sequence TSMDSRLRPL…SFKLFLGLVD (79 aa). Residue Ser-1698 is modified to O-(pantetheine 4'-phosphoryl)serine. A disordered region spans residues 1742-1779; that stretch reads KSSSGSDGSGRSSPAPGIESGATTPPMSEEDQDKIVSS. Low complexity predominate over residues 1743–1754; the sequence is SSSGSDGSGRSS. The interval 1781–2065 is claisen cyclase domain; sequence SLHQFQASST…YVSAFLARAL (285 aa). Catalysis depends on Ser-1875, which acts as the For Claisen cyclase activity.

It carries out the reaction 6 malonyl-CoA + acetyl-CoA + 6 H(+) = naphtopyrone YWA1 + 6 CO2 + 7 CoA + H2O. The protein operates within pigment biosynthesis. In terms of biological role, non-reducing polyketide synthase; part of the gene cluster that mediates the biosynthesis of aurofusarin, a red mycelium pigment which is acting as a mycotoxin. The first step is performed by the polyketide synthase which condenses one acetyl-CoA and 6 malonyl-CoA units to form the first intermediate, the cyclic heptaketide and yellow pigment YWA1. The C2 hydroxyl group in the pyrone ring of YWA1 is probably formed during ring closure by an aldol-type cyclization reaction. The dehydratase aurZ then acts as the first tailoring enzyme in the aurofusarin biosynthetic pathway by converting YWA1 to nor-rubrofusarin. Nor-rubrofusarin is then methylated to rubrofusarin by the O-methyltransferase aurJ. Rubrofusarin is then transported across the plasma membrane by the rubrofusarin-specific pump aurT for further enzymatic processing by the extracellular complex composed of GIP1, aurF, aurO and aurS to yield aurofusarin. This Gibberella zeae (strain ATCC MYA-4620 / CBS 123657 / FGSC 9075 / NRRL 31084 / PH-1) (Wheat head blight fungus) protein is Non-reducing polyketide synthase PKS12.